We begin with the raw amino-acid sequence, 359 residues long: Glycerol-3-phosphate dehydrogenase [NAD(P)+] (359 aa).

NADPH-binding residues include T11, W12, R32, and K107. Residues K107 and G138 each contribute to the sn-glycerol 3-phosphate site. Position 142 (A142) interacts with NADPH. K193, D246, S256, R257, and N258 together coordinate sn-glycerol 3-phosphate. K193 (proton acceptor) is an active-site residue. R257 contacts NADPH. V281 and E283 together coordinate NADPH.

This sequence belongs to the NAD-dependent glycerol-3-phosphate dehydrogenase family.

The protein localises to the cytoplasm. The enzyme catalyses sn-glycerol 3-phosphate + NAD(+) = dihydroxyacetone phosphate + NADH + H(+). It catalyses the reaction sn-glycerol 3-phosphate + NADP(+) = dihydroxyacetone phosphate + NADPH + H(+). Its pathway is membrane lipid metabolism; glycerophospholipid metabolism. Catalyzes the reduction of the glycolytic intermediate dihydroxyacetone phosphate (DHAP) to sn-glycerol 3-phosphate (G3P), the key precursor for phospholipid synthesis. This Dehalococcoides mccartyi (strain ATCC BAA-2266 / KCTC 15142 / 195) (Dehalococcoides ethenogenes (strain 195)) protein is Glycerol-3-phosphate dehydrogenase [NAD(P)+].